Reading from the N-terminus, the 132-residue chain is Flagellar assembly factor FliW (132 aa).

The protein belongs to the FliW family. As to quaternary structure, interacts with translational regulator CsrA and flagellin(s).

It localises to the cytoplasm. Its function is as follows. Acts as an anti-CsrA protein, binds CsrA and prevents it from repressing translation of its target genes, one of which is flagellin. Binds to flagellin and participates in the assembly of the flagellum. The polypeptide is Flagellar assembly factor FliW (Borreliella afzelii (strain PKo) (Borrelia afzelii)).